Here is a 487-residue protein sequence, read N- to C-terminus: Glutamyl-tRNA(Gln) amidotransferase subunit A (487 aa).

Catalysis depends on charge relay system residues Lys-78 and Ser-153. The active-site Acyl-ester intermediate is Ser-177.

This sequence belongs to the amidase family. GatA subfamily. As to quaternary structure, heterotrimer of A, B and C subunits.

The enzyme catalyses L-glutamyl-tRNA(Gln) + L-glutamine + ATP + H2O = L-glutaminyl-tRNA(Gln) + L-glutamate + ADP + phosphate + H(+). In terms of biological role, allows the formation of correctly charged Gln-tRNA(Gln) through the transamidation of misacylated Glu-tRNA(Gln) in organisms which lack glutaminyl-tRNA synthetase. The reaction takes place in the presence of glutamine and ATP through an activated gamma-phospho-Glu-tRNA(Gln). This is Glutamyl-tRNA(Gln) amidotransferase subunit A from Oenococcus oeni (strain ATCC BAA-331 / PSU-1).